Reading from the N-terminus, the 284-residue chain is Bifunctional protein FolD (284 aa).

NADP(+)-binding positions include 166 to 168 (GAS) and isoleucine 232.

This sequence belongs to the tetrahydrofolate dehydrogenase/cyclohydrolase family. Homodimer.

It carries out the reaction (6R)-5,10-methylene-5,6,7,8-tetrahydrofolate + NADP(+) = (6R)-5,10-methenyltetrahydrofolate + NADPH. The catalysed reaction is (6R)-5,10-methenyltetrahydrofolate + H2O = (6R)-10-formyltetrahydrofolate + H(+). The protein operates within one-carbon metabolism; tetrahydrofolate interconversion. Its function is as follows. Catalyzes the oxidation of 5,10-methylenetetrahydrofolate to 5,10-methenyltetrahydrofolate and then the hydrolysis of 5,10-methenyltetrahydrofolate to 10-formyltetrahydrofolate. In Stutzerimonas stutzeri (strain A1501) (Pseudomonas stutzeri), this protein is Bifunctional protein FolD.